The primary structure comprises 418 residues: Phosphoglycerate kinase (418 aa).

Residues Val-23, Asp-24, Phe-25, Asn-26, Gln-39, Arg-40, Ser-63, His-64, Gly-66, Arg-67, Leu-122, Arg-123, His-170, and Arg-171 each coordinate (2R)-3-phosphoglycerate. An ADP-binding site is contributed by Gly-214. Gly-214 contributes to the CDP binding site. AMP-binding residues include Ala-215 and Lys-216. Ala-215 is an ATP binding site. Ala-215 is a binding site for Mg(2+). Asp-219 serves as a coordination point for CDP. Residue Asp-219 coordinates Mg(2+). Lys-220 is an AMP binding site. Lys-220 is an ATP binding site. Gly-238 contributes to the ADP binding site. Gly-238 serves as a coordination point for CDP. AMP contacts are provided by Gly-239 and Gly-313. Positions 239 and 313 each coordinate ATP. The CDP site is built by Gly-338, Ala-340, and Phe-343. Phe-343 provides a ligand contact to ADP. Position 344 (Glu-344) interacts with AMP. ATP-binding residues include Glu-344, Asp-375, and Thr-376. Asp-375 is a binding site for Mg(2+).

It belongs to the phosphoglycerate kinase family. As to quaternary structure, monomer. It depends on Mg(2+) as a cofactor.

The protein resides in the cytoplasm. It is found in the mitochondrion. It catalyses the reaction (2R)-3-phosphoglycerate + ATP = (2R)-3-phospho-glyceroyl phosphate + ADP. It functions in the pathway carbohydrate degradation; glycolysis; pyruvate from D-glyceraldehyde 3-phosphate: step 2/5. Its function is as follows. Catalyzes one of the two ATP producing reactions in the glycolytic pathway via the reversible conversion of 1,3-diphosphoglycerate to 3-phosphoglycerate. Both L- and D- forms of purine and pyrimidine nucleotides can be used as substrates, but the activity is much lower on pyrimidines. Negatively regulates the biosynthesis of acetyl-CoA from pyruvate in the mitochondrion. The sequence is that of Phosphoglycerate kinase (pgk-1) from Neurospora crassa (strain ATCC 24698 / 74-OR23-1A / CBS 708.71 / DSM 1257 / FGSC 987).